The primary structure comprises 429 residues: ATP-dependent RNA helicase RhlB (429 aa).

The short motif at 9–37 is the Q motif element; the sequence is DKFAQMGLEPEVLAGLESKGFHYCTPIQA. The 180-residue stretch at 40–219 folds into the Helicase ATP-binding domain; sequence LPLLVEGHDL…YEHMNHPEHV (180 aa). 53-60 contacts ATP; sequence AQTGTGKT. Residues 165-168 carry the DEAD box motif; sequence DEAD. The 148-residue stretch at 243–390 folds into the Helicase C-terminal domain; that stretch reads KMLLLLSLME…VSKYDREALL (148 aa). Positions 399 to 429 are disordered; the sequence is VFRNRQPVNRNMRDRQGGGNSNNRRRPPRKS.

The protein belongs to the DEAD box helicase family. RhlB subfamily. In terms of assembly, component of the RNA degradosome, which is a multiprotein complex involved in RNA processing and mRNA degradation.

It is found in the cytoplasm. The catalysed reaction is ATP + H2O = ADP + phosphate + H(+). DEAD-box RNA helicase involved in RNA degradation. Has RNA-dependent ATPase activity and unwinds double-stranded RNA. This chain is ATP-dependent RNA helicase RhlB, found in Aeromonas hydrophila subsp. hydrophila (strain ATCC 7966 / DSM 30187 / BCRC 13018 / CCUG 14551 / JCM 1027 / KCTC 2358 / NCIMB 9240 / NCTC 8049).